Reading from the N-terminus, the 338-residue chain is Anthranilate phosphoribosyltransferase (338 aa).

5-phospho-alpha-D-ribose 1-diphosphate is bound by residues Gly83, 86–87 (GD), Ser91, 93–96 (NCST), 111–119 (KHGNRAVSS), and Ala123. Gly83 is an anthranilate binding site. Residue Ser95 coordinates Mg(2+). Residue Asn114 participates in anthranilate binding. An anthranilate-binding site is contributed by Arg169. Mg(2+) is bound by residues Asp228 and Glu229.

This sequence belongs to the anthranilate phosphoribosyltransferase family. In terms of assembly, homodimer. The cofactor is Mg(2+).

It catalyses the reaction N-(5-phospho-beta-D-ribosyl)anthranilate + diphosphate = 5-phospho-alpha-D-ribose 1-diphosphate + anthranilate. Its pathway is amino-acid biosynthesis; L-tryptophan biosynthesis; L-tryptophan from chorismate: step 2/5. Functionally, catalyzes the transfer of the phosphoribosyl group of 5-phosphorylribose-1-pyrophosphate (PRPP) to anthranilate to yield N-(5'-phosphoribosyl)-anthranilate (PRA). The sequence is that of Anthranilate phosphoribosyltransferase from Nitratidesulfovibrio vulgaris (strain DSM 19637 / Miyazaki F) (Desulfovibrio vulgaris).